We begin with the raw amino-acid sequence, 78 residues long: UPF0612 protein new22 (78 aa).

It belongs to the UPF0612 family.

The sequence is that of UPF0612 protein new22 (new22) from Schizosaccharomyces pombe (strain 972 / ATCC 24843) (Fission yeast).